Here is a 468-residue protein sequence, read N- to C-terminus: GDNF family receptor alpha-1 (468 aa).

The signal sequence occupies residues 1 to 24; that stretch reads MFLATLYFALPLLDLLMSAEVSGG. 3 consecutive repeat copies span residues 25–113, 150–238, and 239–342. An intrachain disulfide couples cysteine 36 to cysteine 42. The N-linked (GlcNAc...) asparagine glycan is linked to asparagine 59. 10 disulfide bridges follow: cysteine 154–cysteine 214, cysteine 161–cysteine 167, cysteine 178–cysteine 192, cysteine 187–cysteine 233, cysteine 216–cysteine 221, cysteine 243–cysteine 313, cysteine 250–cysteine 256, cysteine 267–cysteine 285, cysteine 277–cysteine 337, and cysteine 315–cysteine 325. N-linked (GlcNAc...) asparagine glycosylation is found at asparagine 347 and asparagine 406. Residue serine 430 is the site of GPI-anchor amidated serine attachment. Positions 431 to 468 are cleaved as a propeptide — removed in mature form; sequence HITTKSMAAPPSCSLSSLPVLMLTALAALLSVSLAETS.

This sequence belongs to the GDNFR family. In terms of assembly, interacts with GDNF ligand and RET: forms a 2:2:2 ternary complex composed of GDNF ligand, GFRA1 and RET receptor. Interacts with SORL1, either alone or in complex with GDNF. Interaction between SORL1 and GFRA1 leads to GFRA1 internalization, but not degradation. In terms of tissue distribution, expressed in liver, brain, kidney and cochlea.

It localises to the cell membrane. Its subcellular location is the golgi apparatus. The protein localises to the trans-Golgi network. The protein resides in the endosome. It is found in the multivesicular body. In terms of biological role, coreceptor for GDNF, a neurotrophic factor that enhances survival and morphological differentiation of dopaminergic neurons and increases their high-affinity dopamine uptake. GDNF-binding leads to autophosphorylation and activation of the RET receptor. This chain is GDNF family receptor alpha-1 (Gfra1), found in Rattus norvegicus (Rat).